The following is a 392-amino-acid chain: Phosphoglycerate kinase (392 aa).

Residues 21 to 23 (DFN), arginine 36, 59 to 62 (HLGR), arginine 118, and arginine 151 each bind substrate. ATP-binding positions include lysine 201, glycine 292, glutamate 323, and 349 to 352 (GGDS).

It belongs to the phosphoglycerate kinase family. As to quaternary structure, monomer.

It localises to the cytoplasm. It carries out the reaction (2R)-3-phosphoglycerate + ATP = (2R)-3-phospho-glyceroyl phosphate + ADP. The protein operates within carbohydrate degradation; glycolysis; pyruvate from D-glyceraldehyde 3-phosphate: step 2/5. The protein is Phosphoglycerate kinase of Borrelia hermsii (strain HS1 / DAH).